The primary structure comprises 112 residues: MAELGQKHALEMVRTDGADEGCVTFVLNEEDHTLGNSLRYMIMKSQDVEFCGYSITHPSESKINFRIQTRDGVPASEPLRNGLNNLTDVCKHVLQTFEARMKEFKEQEESMT.

Belongs to the archaeal Rpo11/eukaryotic RPB11/RPC19 RNA polymerase subunit family. As to quaternary structure, component of the RNA polymerase I (Pol I) and RNA polymerase III (Pol III) complexes consisting of at least 13 and 17 subunits, respectively.

Its subcellular location is the nucleus. In terms of biological role, DNA-dependent RNA polymerase catalyzes the transcription of DNA into RNA using the four ribonucleoside triphosphates as substrates. Common core component of RNA polymerases I and III which synthesize ribosomal RNA precursors and small RNAs, such as 5S rRNA and tRNAs, respectively. The chain is DNA-directed RNA polymerases I and III subunit RPAC2 (polr1d) from Danio rerio (Zebrafish).